Reading from the N-terminus, the 230-residue chain is Cytochrome c oxidase subunit 2 (230 aa).

The Mitochondrial intermembrane segment spans residues 1–26; that stretch reads MATPAQLGLMDAASPVMEEMIYFHDH. The helical transmembrane segment at 27 to 48 threads the bilayer; the sequence is VMLVLILITCLIFYSMLVLISS. The Mitochondrial matrix portion of the chain corresponds to 49–62; it reads KYIYRFLTDGHVIE. A helical membrane pass occupies residues 63–82; sequence TVWTVIPAIILVVVALPSLK. At 83–230 the chain is on the mitochondrial intermembrane side; the sequence is LLYLTDELDN…GWCDMMLDEE (148 aa). 6 residues coordinate Cu cation: H161, C196, E198, C200, H204, and M207. Position 198 (E198) interacts with Mg(2+).

The protein belongs to the cytochrome c oxidase subunit 2 family. Component of the cytochrome c oxidase (complex IV, CIV), a multisubunit enzyme composed of a catalytic core of 3 subunits and several supernumerary subunits. The complex exists as a monomer or a dimer and forms supercomplexes (SCs) in the inner mitochondrial membrane with ubiquinol-cytochrome c oxidoreductase (cytochrome b-c1 complex, complex III, CIII). Cu cation is required as a cofactor.

The protein resides in the mitochondrion inner membrane. The catalysed reaction is 4 Fe(II)-[cytochrome c] + O2 + 8 H(+)(in) = 4 Fe(III)-[cytochrome c] + 2 H2O + 4 H(+)(out). Functionally, component of the cytochrome c oxidase, the last enzyme in the mitochondrial electron transport chain which drives oxidative phosphorylation. The respiratory chain contains 3 multisubunit complexes succinate dehydrogenase (complex II, CII), ubiquinol-cytochrome c oxidoreductase (cytochrome b-c1 complex, complex III, CIII) and cytochrome c oxidase (complex IV, CIV), that cooperate to transfer electrons derived from NADH and succinate to molecular oxygen, creating an electrochemical gradient over the inner membrane that drives transmembrane transport and the ATP synthase. Cytochrome c oxidase is the component of the respiratory chain that catalyzes the reduction of oxygen to water. Electrons originating from reduced cytochrome c in the intermembrane space (IMS) are transferred via the dinuclear copper A center (CU(A)) of subunit 2 and heme A of subunit 1 to the active site in subunit 1, a binuclear center (BNC) formed by heme A3 and copper B (CU(B)). The BNC reduces molecular oxygen to 2 water molecules using 4 electrons from cytochrome c in the IMS and 4 protons from the mitochondrial matrix. In Branchiostoma floridae (Florida lancelet), this protein is Cytochrome c oxidase subunit 2 (COII).